The chain runs to 211 residues: tRNA (guanine-N(7)-)-methyltransferase (211 aa).

4 residues coordinate S-adenosyl-L-methionine: Asp-40, Glu-65, Asn-92, and Asp-117. Asp-117 is an active-site residue. Lys-121 is a substrate binding site. Residues 123 to 128 form an interaction with RNA region; that stretch reads RHNKRR. Asp-153 contributes to the substrate binding site.

It belongs to the class I-like SAM-binding methyltransferase superfamily. TrmB family.

It catalyses the reaction guanosine(46) in tRNA + S-adenosyl-L-methionine = N(7)-methylguanosine(46) in tRNA + S-adenosyl-L-homocysteine. The protein operates within tRNA modification; N(7)-methylguanine-tRNA biosynthesis. Catalyzes the formation of N(7)-methylguanine at position 46 (m7G46) in tRNA. This is tRNA (guanine-N(7)-)-methyltransferase from Synechocystis sp. (strain ATCC 27184 / PCC 6803 / Kazusa).